Reading from the N-terminus, the 404-residue chain is Serine/threonine transporter SstT (404 aa).

The next 9 helical transmembrane spans lie at 11-31, 44-64, 82-102, 144-164, 179-199, 218-238, 290-310, 316-336, and 363-383; these read IINANLVLQIIFGIAAGIILA, LGGLFVGALKAVAPILVFVLV, IISLYLIGTLLAALTAVTMSF, TANYIGILAWAIGLGIALHHA, VSFIVRFIIRLAPIGIFGLVA, GVLLGSMAIVALVINPLMVFI, IPLGATINMAGAAITITVLTL, MGIQVDMFTALLLSVVAAISA, and VAMQVVGVGFIIGVIQDSAET.

It belongs to the dicarboxylate/amino acid:cation symporter (DAACS) (TC 2.A.23) family.

The protein resides in the cell inner membrane. It catalyses the reaction L-serine(in) + Na(+)(in) = L-serine(out) + Na(+)(out). The catalysed reaction is L-threonine(in) + Na(+)(in) = L-threonine(out) + Na(+)(out). Functionally, involved in the import of serine and threonine into the cell, with the concomitant import of sodium (symport system). This Desulfotalea psychrophila (strain LSv54 / DSM 12343) protein is Serine/threonine transporter SstT.